Consider the following 206-residue polypeptide: Protein sym1 (206 aa).

Helical transmembrane passes span 107–127 (VLLDQAVFAPFGTAFFFSWMT) and 169–189 (LQYQMPFACTVAIFWNIFLSL).

This sequence belongs to the peroxisomal membrane protein PXMP2/4 family.

It localises to the mitochondrion inner membrane. This chain is Protein sym1 (sym1), found in Schizosaccharomyces pombe (strain 972 / ATCC 24843) (Fission yeast).